Consider the following 337-residue polypeptide: F420-dependent glucose-6-phosphate dehydrogenase (337 aa).

A coenzyme F420-(gamma-Glu)n-binding site is contributed by Asp-40. Catalysis depends on His-41, which acts as the Proton donor. Residues Thr-77 and 108-109 (SG) contribute to the coenzyme F420-(gamma-Glu)n site. Glu-110 (proton acceptor) is an active-site residue. Residues Asn-113, 178 to 179 (GG), and 181 to 182 (VV) contribute to the coenzyme F420-(gamma-Glu)n site. Substrate is bound by residues Thr-196, Lys-199, Lys-260, and Arg-284.

The protein belongs to the F420-dependent glucose-6-phosphate dehydrogenase family. In terms of assembly, homodimer.

The enzyme catalyses oxidized coenzyme F420-(gamma-L-Glu)(n) + D-glucose 6-phosphate + H(+) = 6-phospho-D-glucono-1,5-lactone + reduced coenzyme F420-(gamma-L-Glu)(n). In terms of biological role, catalyzes the coenzyme F420-dependent oxidation of glucose 6-phosphate (G6P) to 6-phosphogluconolactone. In Rhodococcus erythropolis (strain PR4 / NBRC 100887), this protein is F420-dependent glucose-6-phosphate dehydrogenase.